Reading from the N-terminus, the 329-residue chain is DNA-directed RNA polymerase subunit alpha (329 aa).

Residues 1–235 are alpha N-terminal domain (alpha-NTD); the sequence is MQGSVTEFLK…EQLDAFVDLR (235 aa). The segment at 249-329 is alpha C-terminal domain (alpha-CTD); that stretch reads FDPILLRPVD…NWPPASIAED (81 aa).

Belongs to the RNA polymerase alpha chain family. As to quaternary structure, homodimer. The RNAP catalytic core consists of 2 alpha, 1 beta, 1 beta' and 1 omega subunit. When a sigma factor is associated with the core the holoenzyme is formed, which can initiate transcription.

The enzyme catalyses RNA(n) + a ribonucleoside 5'-triphosphate = RNA(n+1) + diphosphate. DNA-dependent RNA polymerase catalyzes the transcription of DNA into RNA using the four ribonucleoside triphosphates as substrates. The sequence is that of DNA-directed RNA polymerase subunit alpha from Pasteurella multocida (strain Pm70).